Reading from the N-terminus, the 363-residue chain is D(1) dopamine receptor (363 aa).

Over 1–24 the chain is Extracellular; it reads MAVLDLNLTTVIDSGFMESDRSVR. An N-linked (GlcNAc...) asparagine glycan is attached at Asn7. A helical transmembrane segment spans residues 25–45; it reads VLTGCFLSVLILSTLLGNTLV. At 46-61 the chain is on the cytoplasmic side; the sequence is CAAVTKFRHLRSKVTN. Residues 62-81 form a helical membrane-spanning segment; that stretch reads FFVISLAVSDLLVAVLVMPW. Topologically, residues 82–98 are extracellular; that stretch reads KAVTEVAGFWPFGAFCD. Cys97 and Cys187 are oxidised to a cystine. The chain crosses the membrane as a helical span at residues 99–120; the sequence is IWVAFDIMCSTASILNLCVISV. Residues 121–139 are Cytoplasmic-facing; the sequence is DRYWAISSPFRYERKMTPR. A helical membrane pass occupies residues 140–164; that stretch reads VAFVMISGAWTLSVLISFIPVQLKW. The Extracellular portion of the chain corresponds to 165–194; it reads HKAQPIGFLEVNASRRDLPTDNCDSSLNRT. The helical transmembrane segment at 195–219 threads the bilayer; it reads YAISSSLISFYIPVAIMIVTYTQIY. Residues 220 to 271 are Cytoplasmic-facing; the sequence is RIAQKQIRRISALERAAESAQIRHDSMGSGSNMDLESSFKLSFKRETKVLKT. A helical membrane pass occupies residues 272 to 297; it reads LSVIMGVFVCCWLPFFILNCMVPFCK. The Extracellular portion of the chain corresponds to 298-310; the sequence is RTSNGLPCISPTT. Residues 311–330 form a helical membrane-spanning segment; sequence FDVFVWFGWANSSLNPIIYA. Residues 331 to 363 lie on the Cytoplasmic side of the membrane; it reads FNADFRRAFAILLGCQRLCPGSISMETPSLNKN. Cys345 carries the S-palmitoyl cysteine lipid modification.

Belongs to the G-protein coupled receptor 1 family. Retina.

It localises to the cell membrane. It is found in the cell projection. The protein resides in the cilium membrane. Dopamine receptor whose activity is mediated by G proteins which activate adenylyl cyclase. Could be involved in growth hormone release. This chain is D(1) dopamine receptor, found in Carassius auratus (Goldfish).